A 173-amino-acid chain; its full sequence is NADH-ubiquinone oxidoreductase chain 6 (173 aa).

The next 4 membrane-spanning stretches (helical) occupy residues 24–44, 49–69, 80–100, and 139–159; these read MSIM…TGTM, WLSY…FIYI, IKIN…TLMY, and PTVI…LAVV.

Belongs to the complex I subunit 6 family.

The protein localises to the mitochondrion membrane. The enzyme catalyses a ubiquinone + NADH + 5 H(+)(in) = a ubiquinol + NAD(+) + 4 H(+)(out). Its function is as follows. Core subunit of the mitochondrial membrane respiratory chain NADH dehydrogenase (Complex I) that is believed to belong to the minimal assembly required for catalysis. Complex I functions in the transfer of electrons from NADH to the respiratory chain. The immediate electron acceptor for the enzyme is believed to be ubiquinone. The polypeptide is NADH-ubiquinone oxidoreductase chain 6 (ND6) (Locusta migratoria (Migratory locust)).